Here is a 249-residue protein sequence, read N- to C-terminus: LexA repressor (249 aa).

A disordered region spans residues 1–25 (MAAAATGGRATSQPKKTTKGLTPRQ). The segment at residues 45-65 (MREIGDTVGLASLSSVTHQLS) is a DNA-binding region (H-T-H motif). Catalysis depends on for autocatalytic cleavage activity residues Ser173 and Lys210.

Belongs to the peptidase S24 family. Homodimer.

The catalysed reaction is Hydrolysis of Ala-|-Gly bond in repressor LexA.. Functionally, represses a number of genes involved in the response to DNA damage (SOS response), including recA and lexA. In the presence of single-stranded DNA, RecA interacts with LexA causing an autocatalytic cleavage which disrupts the DNA-binding part of LexA, leading to derepression of the SOS regulon and eventually DNA repair. This Pseudarthrobacter chlorophenolicus (strain ATCC 700700 / DSM 12829 / CIP 107037 / JCM 12360 / KCTC 9906 / NCIMB 13794 / A6) (Arthrobacter chlorophenolicus) protein is LexA repressor.